The sequence spans 478 residues: Multidrug resistance outer membrane protein MdtQ (478 aa).

A signal peptide spans 1-21; the sequence is MNRDSFYPAIACFPLLLMLAG. Cys22 carries the N-palmitoyl cysteine lipid modification. Cys22 is lipidated: S-diacylglycerol cysteine.

It belongs to the outer membrane factor (OMF) (TC 1.B.17) family.

The protein resides in the cell outer membrane. In terms of biological role, could be involved in resistance to puromycin, acriflavine and tetraphenylarsonium chloride. This chain is Multidrug resistance outer membrane protein MdtQ (mdtQ), found in Escherichia coli O6:H1 (strain CFT073 / ATCC 700928 / UPEC).